The primary structure comprises 251 residues: Phosphate import ATP-binding protein PstB (251 aa).

One can recognise an ABC transporter domain in the interval 5 to 246; that stretch reads MNSKDVNFWY…PENKKTEDYI (242 aa). 37 to 44 contributes to the ATP binding site; it reads GPSGCGKS.

This sequence belongs to the ABC transporter superfamily. Phosphate importer (TC 3.A.1.7) family. In terms of assembly, the complex is composed of two ATP-binding proteins (PstB), two transmembrane proteins (PstC and PstA) and a solute-binding protein (PstS).

The protein localises to the cell membrane. The catalysed reaction is phosphate(out) + ATP + H2O = ADP + 2 phosphate(in) + H(+). Functionally, part of the ABC transporter complex PstSACB involved in phosphate import. Responsible for energy coupling to the transport system. This chain is Phosphate import ATP-binding protein PstB, found in Methanococcus maripaludis (strain DSM 14266 / JCM 13030 / NBRC 101832 / S2 / LL).